Consider the following 413-residue polypeptide: S-adenosylmethionine synthase (413 aa).

Residue histidine 15 participates in ATP binding. Aspartate 17 lines the Mg(2+) pocket. Glutamate 43 is a binding site for K(+). The L-methionine site is built by glutamate 56 and glutamine 100. Residues 100 to 110 (QSPDISQGVND) are flexible loop. ATP is bound by residues 171–173 (DGK), 248–249 (KF), aspartate 257, 263–264 (RK), alanine 280, and lysine 284. Aspartate 257 contacts L-methionine. Lysine 288 lines the L-methionine pocket.

This sequence belongs to the AdoMet synthase family. As to quaternary structure, homotetramer; dimer of dimers. It depends on Mg(2+) as a cofactor. The cofactor is K(+).

The protein localises to the cytoplasm. The enzyme catalyses L-methionine + ATP + H2O = S-adenosyl-L-methionine + phosphate + diphosphate. It functions in the pathway amino-acid biosynthesis; S-adenosyl-L-methionine biosynthesis; S-adenosyl-L-methionine from L-methionine: step 1/1. Its function is as follows. Catalyzes the formation of S-adenosylmethionine (AdoMet) from methionine and ATP. The overall synthetic reaction is composed of two sequential steps, AdoMet formation and the subsequent tripolyphosphate hydrolysis which occurs prior to release of AdoMet from the enzyme. The chain is S-adenosylmethionine synthase from Prochlorococcus marinus (strain MIT 9301).